A 283-amino-acid polypeptide reads, in one-letter code: Secretory carrier-associated membrane protein 2 (283 aa).

The tract at residues 1–47 (MARHDPNPFADEEINPFANHTSVPPASNSYLKPLPPEPYDRGATVDI) is disordered. The Cytoplasmic portion of the chain corresponds to 1-123 (MARHDPNPFA…LQKIQYVAFT (123 aa)). The segment covering 18-30 (ANHTSVPPASNSY) has biased composition (polar residues). Residues 50-87 (DSGNDLRAKEMELQAKENELKRKEQELKRREDAIARTG) are a coiled coil. 4 helical membrane passes run 124–144 (TLLG…VAWI), 151–171 (IWLL…VLWY), 186–206 (FGAF…AAVA), and 234–254 (IMYF…IWVI). Residues 255–283 (QQVYAYFRGSGKAAEMKREATKSTLMRAL) lie on the Cytoplasmic side of the membrane.

This sequence belongs to the SCAMP family.

It is found in the cell membrane. The protein localises to the cytoplasmic vesicle. The protein resides in the secretory vesicle membrane. Functionally, probably involved in membrane trafficking. The protein is Secretory carrier-associated membrane protein 2 (SCAMP2) of Arabidopsis thaliana (Mouse-ear cress).